We begin with the raw amino-acid sequence, 206 residues long: MNRAEEPYTVKEALLFSQRMAQLSKALWKSIEKDWQQWIKPYDLNINEHHILWIAYQLNGASISEIAKFGVMHVSTAFNFSKKLEERGYLEFSKKLNDKRNTYIQLTPKGEEVFLKILESYDPTRNAVLKGAQPLHQLYGKFPEIVEMMSIIRHIYGDDFMEIFEKSFSNIENEFTSEEGKMKKKQEAKEAGESIEVDKPLEPLKN.

The HTH marR-type domain maps to 13 to 157; the sequence is ALLFSQRMAQ…MMSIIRHIYG (145 aa). The segment at residues 63-86 is a DNA-binding region (H-T-H motif); sequence ISEIAKFGVMHVSTAFNFSKKLEE. Residues 177–206 are disordered; it reads SEEGKMKKKQEAKEAGESIEVDKPLEPLKN. Residues 178 to 206 show a composition bias toward basic and acidic residues; sequence EEGKMKKKQEAKEAGESIEVDKPLEPLKN.

In terms of assembly, homodimer.

Negative regulator of protease production and sporulation. The polypeptide is HTH-type transcriptional regulator Hpr (Bacillus licheniformis (strain ATCC 14580 / DSM 13 / JCM 2505 / CCUG 7422 / NBRC 12200 / NCIMB 9375 / NCTC 10341 / NRRL NRS-1264 / Gibson 46)).